The sequence spans 283 residues: 4-diphosphocytidyl-2-C-methyl-D-erythritol kinase (283 aa).

Residue lysine 10 is part of the active site. 99 to 109 (PMGGGLGGGSS) is an ATP binding site. Aspartate 141 is an active-site residue.

Belongs to the GHMP kinase family. IspE subfamily. As to quaternary structure, homodimer.

It catalyses the reaction 4-CDP-2-C-methyl-D-erythritol + ATP = 4-CDP-2-C-methyl-D-erythritol 2-phosphate + ADP + H(+). The protein operates within isoprenoid biosynthesis; isopentenyl diphosphate biosynthesis via DXP pathway; isopentenyl diphosphate from 1-deoxy-D-xylulose 5-phosphate: step 3/6. Catalyzes the phosphorylation of the position 2 hydroxy group of 4-diphosphocytidyl-2C-methyl-D-erythritol. In Salmonella paratyphi C (strain RKS4594), this protein is 4-diphosphocytidyl-2-C-methyl-D-erythritol kinase.